The primary structure comprises 386 residues: 3-hydroxyisobutyryl-CoA hydrolase, mitochondrial (386 aa).

The transit peptide at 1–32 directs the protein to the mitochondrion; the sequence is MGLQGLCRLMSRFNSYKRTNIILQHLKMSNHT. Position 92 is an N6-acetyllysine; alternate (Lys92). Lys92 bears the N6-succinyllysine; alternate mark. Residues Glu121, Gly146, Glu169, and Asp177 each contribute to the substrate site. An N6-acetyllysine; alternate modification is found at Lys221. Lys221 is modified (N6-succinyllysine; alternate). Ser234 bears the Phosphoserine mark. 2 positions are modified to N6-succinyllysine: Lys250 and Lys257. Lys297 is subject to N6-acetyllysine; alternate. N6-succinyllysine; alternate is present on Lys297. N6-succinyllysine is present on Lys301. Position 353 is an N6-acetyllysine; alternate (Lys353). Lys353 carries the post-translational modification N6-succinyllysine; alternate. Position 356 is a phosphoserine (Ser356). Residues Lys360 and Lys365 each carry the N6-acetyllysine modification. Lys377 is subject to N6-succinyllysine.

It belongs to the enoyl-CoA hydratase/isomerase family.

Its subcellular location is the mitochondrion. The enzyme catalyses 3-hydroxy-2-methylpropanoyl-CoA + H2O = 3-hydroxy-2-methylpropanoate + CoA + H(+). Its pathway is amino-acid degradation; L-valine degradation. Functionally, hydrolyzes 3-hydroxyisobutyryl-CoA (HIBYL-CoA), a saline catabolite. Has high activity toward isobutyryl-CoA. Could be an isobutyryl-CoA dehydrogenase that functions in valine catabolism. Also hydrolyzes 3-hydroxypropanoyl-CoA. The polypeptide is 3-hydroxyisobutyryl-CoA hydrolase, mitochondrial (HIBCH) (Bos taurus (Bovine)).